A 184-amino-acid chain; its full sequence is CDP-archaeol synthase (184 aa).

The next 5 helical transmembrane spans lie at 4-24, 54-74, 86-106, 122-142, and 145-165; these read IIMV…NPGA, FIGG…IIYI, IISA…GDIT, GSLL…FIFA, and FFLE…LTPP.

Belongs to the CDP-archaeol synthase family. Mg(2+) serves as cofactor.

It is found in the cell membrane. It carries out the reaction 2,3-bis-O-(geranylgeranyl)-sn-glycerol 1-phosphate + CTP + H(+) = CDP-2,3-bis-O-(geranylgeranyl)-sn-glycerol + diphosphate. It functions in the pathway membrane lipid metabolism; glycerophospholipid metabolism. Functionally, catalyzes the formation of CDP-2,3-bis-(O-geranylgeranyl)-sn-glycerol (CDP-archaeol) from 2,3-bis-(O-geranylgeranyl)-sn-glycerol 1-phosphate (DGGGP) and CTP. This reaction is the third ether-bond-formation step in the biosynthesis of archaeal membrane lipids. This Picrophilus torridus (strain ATCC 700027 / DSM 9790 / JCM 10055 / NBRC 100828 / KAW 2/3) protein is CDP-archaeol synthase.